A 1388-amino-acid chain; its full sequence is DNA-directed RNA polymerase subunit beta' (1388 aa).

Cys-65, Cys-67, Cys-80, and Cys-83 together coordinate Zn(2+). Residues Asp-456, Asp-458, and Asp-460 each coordinate Mg(2+). The Zn(2+) site is built by Cys-812, Cys-887, Cys-894, and Cys-897.

Belongs to the RNA polymerase beta' chain family. In terms of assembly, the RNAP catalytic core consists of 2 alpha, 1 beta, 1 beta' and 1 omega subunit. When a sigma factor is associated with the core the holoenzyme is formed, which can initiate transcription. Requires Mg(2+) as cofactor. Zn(2+) is required as a cofactor.

It carries out the reaction RNA(n) + a ribonucleoside 5'-triphosphate = RNA(n+1) + diphosphate. Its function is as follows. DNA-dependent RNA polymerase catalyzes the transcription of DNA into RNA using the four ribonucleoside triphosphates as substrates. This chain is DNA-directed RNA polymerase subunit beta', found in Protochlamydia amoebophila (strain UWE25).